Reading from the N-terminus, the 414-residue chain is Putative competence-damage inducible protein (414 aa).

The protein belongs to the CinA family.

The protein is Putative competence-damage inducible protein of Moorella thermoacetica (strain ATCC 39073 / JCM 9320).